The primary structure comprises 651 residues: Bromodomain-containing protein 7 (651 aa).

Lys-21 is covalently cross-linked (Glycyl lysine isopeptide (Lys-Gly) (interchain with G-Cter in SUMO2)). The span at 35–45 (TELSTGSSGHD) shows a compositional bias: polar residues. Residues 35-132 (TELSTGSSGH…SSLAKQEEVE (98 aa)) form a disordered region. Residues 47–57 (SLFEDKNDHDK) are compositionally biased toward basic and acidic residues. Lys-52 is covalently cross-linked (Glycyl lysine isopeptide (Lys-Gly) (interchain with G-Cter in SUMO2)). Over residues 58–69 (HKDRKRKKRKKG) the composition is skewed to basic residues. The Nuclear localization signal motif lies at 65–96 (KRKKGEKQIPGEEKGRKRRRVKEDKKKRDRDR). Positions 70–106 (EKQIPGEEKGRKRRRVKEDKKKRDRDRVENEAEKDLQ) are enriched in basic and acidic residues. Glycyl lysine isopeptide (Lys-Gly) (interchain with G-Cter in SUMO2) cross-links involve residues Lys-127, Lys-186, Lys-197, Lys-201, Lys-212, and Lys-241. Positions 131–235 (VEQTPLQEAL…HSGMKILSQE (105 aa)) constitute a Bromo domain. The segment at 253-301 (TRKQKDGTDTSQSGEDGGCWQREREDSGDAEAHAFKSPSKENKKKDKDM) is disordered. The span at 273 to 301 (QREREDSGDAEAHAFKSPSKENKKKDKDM) shows a compositional bias: basic and acidic residues. Phosphoserine is present on residues Ser-279 and Ser-289. Glycyl lysine isopeptide (Lys-Gly) (interchain with G-Cter in SUMO2) cross-links involve residues Lys-305 and Lys-307. Position 328 is an N6-acetyllysine (Lys-328). A Glycyl lysine isopeptide (Lys-Gly) (interchain with G-Cter in SUMO2) cross-link involves residue Lys-344. Ser-380 carries the post-translational modification Phosphoserine. A Glycyl lysine isopeptide (Lys-Gly) (interchain with G-Cter in SUMO2) cross-link involves residue Lys-389. The residue at position 482 (Ser-482) is a Phosphoserine. Thr-514 carries the phosphothreonine modification. Positions 536-567 (SEEAEIFQKKLDETTRLLRELQEAQNERLSTR) form a coiled coil. Ser-621 is subject to Phosphoserine.

In terms of assembly, interacts with TRIM24, PTPN13 and DVL1. Identified in a complex with SMARCA4/BRG1, SMARCC1/BAF155, SMARCE1/BAF57, DPF2/BAF45D and ARID2, subunits of the SWI/SNF-B (PBAF) chromatin remodeling complex. Interacts with IRF2 and HNRPUL1. Interacts (via N-terminus) with TP53. Interacts (via C-terminus) with EP300. Interacts with BRCA1. Interacts (via bromo domain) with histone H3 (via N-terminus) acetylated at 'Lys-14' (H3K14ac). Has low affinity for histone H3 acetylated at 'Lys-9' (H3K9ac). Has the highest affinity for histone H3 that is acetylated both at 'Lys-9' (H3K9ac) and at 'Lys-14' (H3K14ac). Has very low affinity for non-acetylated histone H3. Interacts (via bromo domain) with histone H4 (via N-terminus) acetylated at 'Lys-8' (H3K8ac) (in vitro).

It is found in the nucleus. Its subcellular location is the chromosome. Its function is as follows. Acts both as coactivator and as corepressor. May play a role in chromatin remodeling. Activator of the Wnt signaling pathway in a DVL1-dependent manner by negatively regulating the GSK3B phosphotransferase activity. Induces dephosphorylation of GSK3B at 'Tyr-216'. Down-regulates TRIM24-mediated activation of transcriptional activation by AR. Transcriptional corepressor that down-regulates the expression of target genes. Binds to target promoters, leading to increased histone H3 acetylation at 'Lys-9' (H3K9ac). Binds to the ESR1 promoter. Recruits BRCA1 and POU2F1 to the ESR1 promoter. Coactivator for TP53-mediated activation of transcription of a set of target genes. Required for TP53-mediated cell-cycle arrest in response to oncogene activation. Promotes acetylation of TP53 at 'Lys-382', and thereby promotes efficient recruitment of TP53 to target promoters. Inhibits cell cycle progression from G1 to S phase. This is Bromodomain-containing protein 7 (BRD7) from Homo sapiens (Human).